The primary structure comprises 383 residues: Transposase InsI for insertion sequence element IS30A (383 aa).

Residues 213 to 379 form the Integrase catalytic domain; sequence VNGTPIHERS…TPKEIIERGV (167 aa).

The protein belongs to the transposase IS30 family.

Required for the transposition of the insertion element. The sequence is that of Transposase InsI for insertion sequence element IS30A (insI1) from Escherichia coli (strain K12).